Reading from the N-terminus, the 356-residue chain is UDP-N-acetylglucosamine--N-acetylmuramyl-(pentapeptide) pyrophosphoryl-undecaprenol N-acetylglucosamine transferase (356 aa).

Residues 12 to 14 (TGG), N124, R163, S188, I242, 261 to 266 (ALTVSE), and Q287 each bind UDP-N-acetyl-alpha-D-glucosamine.

The protein belongs to the glycosyltransferase 28 family. MurG subfamily.

The protein localises to the cell inner membrane. The enzyme catalyses di-trans,octa-cis-undecaprenyl diphospho-N-acetyl-alpha-D-muramoyl-L-alanyl-D-glutamyl-meso-2,6-diaminopimeloyl-D-alanyl-D-alanine + UDP-N-acetyl-alpha-D-glucosamine = di-trans,octa-cis-undecaprenyl diphospho-[N-acetyl-alpha-D-glucosaminyl-(1-&gt;4)]-N-acetyl-alpha-D-muramoyl-L-alanyl-D-glutamyl-meso-2,6-diaminopimeloyl-D-alanyl-D-alanine + UDP + H(+). Its pathway is cell wall biogenesis; peptidoglycan biosynthesis. In terms of biological role, cell wall formation. Catalyzes the transfer of a GlcNAc subunit on undecaprenyl-pyrophosphoryl-MurNAc-pentapeptide (lipid intermediate I) to form undecaprenyl-pyrophosphoryl-MurNAc-(pentapeptide)GlcNAc (lipid intermediate II). This is UDP-N-acetylglucosamine--N-acetylmuramyl-(pentapeptide) pyrophosphoryl-undecaprenol N-acetylglucosamine transferase from Azotobacter vinelandii (strain DJ / ATCC BAA-1303).